We begin with the raw amino-acid sequence, 280 residues long: 2,3,4,5-tetrahydropyridine-2,6-dicarboxylate N-succinyltransferase (280 aa).

Residues R109 and D146 each contribute to the substrate site.

It belongs to the transferase hexapeptide repeat family. Homotrimer.

It is found in the cytoplasm. The enzyme catalyses (S)-2,3,4,5-tetrahydrodipicolinate + succinyl-CoA + H2O = (S)-2-succinylamino-6-oxoheptanedioate + CoA. It functions in the pathway amino-acid biosynthesis; L-lysine biosynthesis via DAP pathway; LL-2,6-diaminopimelate from (S)-tetrahydrodipicolinate (succinylase route): step 1/3. In Blochmanniella floridana, this protein is 2,3,4,5-tetrahydropyridine-2,6-dicarboxylate N-succinyltransferase.